Consider the following 398-residue polypeptide: S-adenosylmethionine synthase (398 aa).

An ATP-binding site is contributed by H17. A Mg(2+)-binding site is contributed by D19. E45 contributes to the K(+) binding site. E58 and Q101 together coordinate L-methionine. The interval 101-111 is flexible loop; that stretch reads QSPDIAQGVDT. ATP is bound by residues 176 to 178, 243 to 244, D252, 258 to 259, and K279; these read DGK, RF, and RK. D252 contributes to the L-methionine binding site. K283 lines the L-methionine pocket.

The protein belongs to the AdoMet synthase family. Homotetramer; dimer of dimers. Mg(2+) is required as a cofactor. It depends on K(+) as a cofactor.

The protein resides in the cytoplasm. It catalyses the reaction L-methionine + ATP + H2O = S-adenosyl-L-methionine + phosphate + diphosphate. The protein operates within amino-acid biosynthesis; S-adenosyl-L-methionine biosynthesis; S-adenosyl-L-methionine from L-methionine: step 1/1. Its function is as follows. Catalyzes the formation of S-adenosylmethionine (AdoMet) from methionine and ATP. The overall synthetic reaction is composed of two sequential steps, AdoMet formation and the subsequent tripolyphosphate hydrolysis which occurs prior to release of AdoMet from the enzyme. The polypeptide is S-adenosylmethionine synthase (Staphylococcus saprophyticus subsp. saprophyticus (strain ATCC 15305 / DSM 20229 / NCIMB 8711 / NCTC 7292 / S-41)).